We begin with the raw amino-acid sequence, 586 residues long: MFKVIKCNELNEKLINKKVEINAWVKKIRHHGKFTFLDIRDRYEKAQVLITEEHLLKIVEKIKLEYCIKIQGLLIKRPSNMINANMTTGYFEILAKNIEIISKCNELPFMIEDDNNASENSKLKYRYLDLRRDSLKNKIILRCQATHLIRNFLVKRKFLELETPTFVKSTPEGARDFVIPSRIHKGSFYALPQSPQLYKQLIMIAGFDKYFQIARCYRDEDSRGDRQPEFTQLDLEMSFVKKENIFKLIENMLFSIFKNCLNIKLSKKFKKITYKTAMNKYGSDKPDTRFELTLQDISRNLKNSEFNVFKDILNNKGSIKTLIVKDKADTFSRAKINNLEEIAKLYKTQGLYFTKIENNKFSGGIAKFLKTEEQQLIKAYSLENNDIIFFIANNKWEIACKAMGQIRIKIANDLGLIDENKFEFLWVYDFPLFEYDENTKTYIPAHHMFSIPKKRYISNLEKNPNKAIGEIYDLVLNGVELGSGSIRIHNKELQQRIFNIIGFQKEKSEDRFGFFLKALEYGAPNHGGIAIGIDRLIMLMTKSTSIKDVILFPKNSFAASPLDNSPSKISNEQLKELGINIAPDDT.

Residue Glu172 coordinates L-aspartate. The segment at 196 to 199 (QLYK) is aspartate. An L-aspartate-binding site is contributed by Arg218. ATP-binding positions include 218-220 (RDE) and Gln227. L-aspartate is bound at residue His446. Glu480 is a binding site for ATP. Residue Arg487 coordinates L-aspartate. 532–535 (GIDR) is a binding site for ATP.

This sequence belongs to the class-II aminoacyl-tRNA synthetase family. Type 1 subfamily. In terms of assembly, homodimer.

The protein resides in the cytoplasm. The enzyme catalyses tRNA(Asx) + L-aspartate + ATP = L-aspartyl-tRNA(Asx) + AMP + diphosphate. In terms of biological role, aspartyl-tRNA synthetase with relaxed tRNA specificity since it is able to aspartylate not only its cognate tRNA(Asp) but also tRNA(Asn). Reaction proceeds in two steps: L-aspartate is first activated by ATP to form Asp-AMP and then transferred to the acceptor end of tRNA(Asp/Asn). This Borreliella afzelii (strain PKo) (Borrelia afzelii) protein is Aspartate--tRNA(Asp/Asn) ligase.